Consider the following 494-residue polypeptide: UPF0371 protein SP70585_0405 (494 aa).

It belongs to the UPF0371 family.

The sequence is that of UPF0371 protein SP70585_0405 from Streptococcus pneumoniae (strain 70585).